A 207-amino-acid polypeptide reads, in one-letter code: Ribonuclease HII (207 aa).

The RNase H type-2 domain occupies 1–207; sequence MDVLGIDEAG…ATVEKMKNSQ (207 aa). A divalent metal cation contacts are provided by Asp7, Glu8, and Asp105.

The protein belongs to the RNase HII family. Mn(2+) is required as a cofactor. The cofactor is Mg(2+).

Its subcellular location is the cytoplasm. The catalysed reaction is Endonucleolytic cleavage to 5'-phosphomonoester.. Functionally, endonuclease that specifically degrades the RNA of RNA-DNA hybrids. This Methanobrevibacter smithii (strain ATCC 35061 / DSM 861 / OCM 144 / PS) protein is Ribonuclease HII.